The sequence spans 84 residues: Small ribosomal subunit protein uS17 (84 aa).

The protein belongs to the universal ribosomal protein uS17 family. Part of the 30S ribosomal subunit.

One of the primary rRNA binding proteins, it binds specifically to the 5'-end of 16S ribosomal RNA. In Buchnera aphidicola subsp. Cinara cedri (strain Cc), this protein is Small ribosomal subunit protein uS17.